The sequence spans 512 residues: MAITKSTPAPLTGGTLWCVTIALSLATFMQMLDSTISNVAIPTISGFLGASTDEGTWVITSFGVANAIAIPVTGRLAQRIGELRLFLLSVTFFSLSSLMCSLSTNLDVLIFFRVVQGLMAGPLIPLSQSLLLRNYPPEKRTFALALWSMTVIIAPICGPILGGYICDNFSWGWIFLINVPMGIIVLTLCLTLLKGRETETSPVKMNLPGLTLLVLGVGGLQIMLDKGRDLDWFNSSTIIILTVVSVISLISLVIWESTSENPILDLSLFKSRNFTIGIVSITCAYLFYSGAIVLMPQLLQETMGYNAIWAGLAYAPIGIMPLLISPLIGRYGNKIDMRLLVTFSFLMYAVCYYWRSVTFMPTIDFTGIILPQFFQGFAVACFFLPLTTISFSGLPDNKFANASSMSNFFRTLSGSVGTSLTMTLWGRRESLHHSQLTATIDQFNPVFNSSSQIMDKYYGSLSGVLNEINNEITQQSLSISANEIFRMAAIAFILLTVLVWFAKPPFTAKGVG.

The Cytoplasmic portion of the chain corresponds to 1–8 (MAITKSTP). A helical membrane pass occupies residues 9–29 (APLTGGTLWCVTIALSLATFM). Position 30 (Gln-30) is a topological domain, periplasmic. Residues 31–51 (MLDSTISNVAIPTISGFLGAS) traverse the membrane as a helical segment. Over 52–53 (TD) the chain is Cytoplasmic. A helical membrane pass occupies residues 54 to 74 (EGTWVITSFGVANAIAIPVTG). Over 75-84 (RLAQRIGELR) the chain is Periplasmic. The next 2 helical transmembrane spans lie at 85-105 (LFLLSVTFFSLSSLMCSLSTN) and 106-126 (LDVLIFFRVVQGLMAGPLIPL). At 127 to 141 (SQSLLLRNYPPEKRT) the chain is on the periplasmic side. Residues 142–162 (FALALWSMTVIIAPICGPILG) form a helical membrane-spanning segment. The Cytoplasmic portion of the chain corresponds to 163-172 (GYICDNFSWG). The chain crosses the membrane as a helical span at residues 173–193 (WIFLINVPMGIIVLTLCLTLL). The Periplasmic portion of the chain corresponds to 194–204 (KGRETETSPVK). A helical transmembrane segment spans residues 205-225 (MNLPGLTLLVLGVGGLQIMLD). Residues 226 to 234 (KGRDLDWFN) lie on the Cytoplasmic side of the membrane. A helical membrane pass occupies residues 235–255 (SSTIIILTVVSVISLISLVIW). Residues 256 to 273 (ESTSENPILDLSLFKSRN) are Periplasmic-facing. A helical transmembrane segment spans residues 274 to 294 (FTIGIVSITCAYLFYSGAIVL). At 295 to 307 (MPQLLQETMGYNA) the chain is on the cytoplasmic side. A helical transmembrane segment spans residues 308 to 328 (IWAGLAYAPIGIMPLLISPLI). The Periplasmic segment spans residues 329–338 (GRYGNKIDMR). A helical membrane pass occupies residues 339-359 (LLVTFSFLMYAVCYYWRSVTF). Topologically, residues 360 to 364 (MPTID) are cytoplasmic. A helical transmembrane segment spans residues 365 to 385 (FTGIILPQFFQGFAVACFFLP). At 386–486 (LTTISFSGLP…LSISANEIFR (101 aa)) the chain is on the periplasmic side. The helical transmembrane segment at 487 to 507 (MAAIAFILLTVLVWFAKPPFT) threads the bilayer. Residues 508-512 (AKGVG) are Cytoplasmic-facing.

This sequence belongs to the major facilitator superfamily. EmrB family. In terms of assembly, part of the tripartite efflux system EmrYK-TolC, which is composed of an inner membrane transporter, EmrY, a membrane fusion protein, EmrK, and an outer membrane component, TolC. The complex forms a large protein conduit and can translocate molecules across both the inner and outer membranes.

It localises to the cell inner membrane. Part of the tripartite efflux system EmrYK-TolC, which confers resistance to various drugs. In Escherichia coli (strain K12), this protein is Probable multidrug resistance protein EmrY (emrY).